Consider the following 161-residue polypeptide: Nucleotide-binding protein Aave_1854 (161 aa).

It belongs to the YajQ family.

In terms of biological role, nucleotide-binding protein. The polypeptide is Nucleotide-binding protein Aave_1854 (Paracidovorax citrulli (strain AAC00-1) (Acidovorax citrulli)).